A 1071-amino-acid polypeptide reads, in one-letter code: ATP-dependent helicase/deoxyribonuclease subunit B (1071 aa).

This sequence belongs to the helicase family. AddB/RexB type 2 subfamily. Heterodimer of AddA and RexB. The cofactor is Mg(2+).

The heterodimer acts as both an ATP-dependent DNA helicase and an ATP-dependent, dual-direction single-stranded exonuclease. Recognizes the chi site generating a DNA molecule suitable for the initiation of homologous recombination. This subunit has 5' -&gt; 3' nuclease activity but not helicase activity. In Streptococcus pyogenes serotype M18 (strain MGAS8232), this protein is ATP-dependent helicase/deoxyribonuclease subunit B.